The chain runs to 259 residues: V-type proton ATPase subunit D (259 aa).

The tract at residues Lys-214–Asn-259 is disordered.

Belongs to the V-ATPase D subunit family. In terms of assembly, V-ATPase is a heteromultimeric enzyme made up of two complexes: the ATP-hydrolytic V1 complex and the proton translocation V0 complex. The V1 complex consists of three catalytic AB heterodimers that form a heterohexamer, three peripheral stalks each consisting of EG heterodimers, one central rotor including subunits D and F, and the regulatory subunits C and H. The proton translocation complex V0 consists of the proton transport subunit a, a ring of proteolipid subunits c9c'', rotary subunit d, and The proton translocation complex V0 consists of the proton transport subunit a, a ring of proteolipid subunits c9c'', rotary subunit d, subunits e and f, and the accessory subunits vah-19/Ac45 and vah-20/PRR.

Subunit of the V1 complex of vacuolar(H+)-ATPase (V-ATPase), a multisubunit enzyme composed of a peripheral complex (V1) that hydrolyzes ATP and a membrane integral complex (V0) that translocates protons. V-ATPase is responsible for acidifying and maintaining the pH of intracellular compartments and in some cell types, is targeted to the plasma membrane, where it is responsible for acidifying the extracellular environment. The sequence is that of V-type proton ATPase subunit D from Caenorhabditis briggsae.